The following is a 134-amino-acid chain: MWSDPIADMLTRIRNANVVFKEYVDVPASNIKKAICEILKKEGFIHDYKYIEDGKQGILRIHMKYKGQRRDRERVIKGIVRVSKPGRRLYVSKDEIPKVKNGIGVAILTTSKGVVTDKEARVLGVGGEVIAYIW.

This sequence belongs to the universal ribosomal protein uS8 family. In terms of assembly, part of the 30S ribosomal subunit. Contacts proteins S5 and S12.

In terms of biological role, one of the primary rRNA binding proteins, it binds directly to 16S rRNA central domain where it helps coordinate assembly of the platform of the 30S subunit. This is Small ribosomal subunit protein uS8 from Pseudothermotoga lettingae (strain ATCC BAA-301 / DSM 14385 / NBRC 107922 / TMO) (Thermotoga lettingae).